The chain runs to 379 residues: Queuine tRNA-ribosyltransferase (379 aa).

Asp96 functions as the Proton acceptor in the catalytic mechanism. Residues 96–100 (DSGGF), Asp150, Gln196, and Gly223 contribute to the substrate site. The segment at 254–260 (GIGTPDY) is RNA binding. The active-site Nucleophile is Asp273. Residues Cys311, Cys313, Cys316, and His342 each coordinate Zn(2+).

It belongs to the queuine tRNA-ribosyltransferase family. Homodimer. Within each dimer, one monomer is responsible for RNA recognition and catalysis, while the other monomer binds to the replacement base PreQ1. The cofactor is Zn(2+).

It catalyses the reaction 7-aminomethyl-7-carbaguanine + guanosine(34) in tRNA = 7-aminomethyl-7-carbaguanosine(34) in tRNA + guanine. It functions in the pathway tRNA modification; tRNA-queuosine biosynthesis. In terms of biological role, catalyzes the base-exchange of a guanine (G) residue with the queuine precursor 7-aminomethyl-7-deazaguanine (PreQ1) at position 34 (anticodon wobble position) in tRNAs with GU(N) anticodons (tRNA-Asp, -Asn, -His and -Tyr). Catalysis occurs through a double-displacement mechanism. The nucleophile active site attacks the C1' of nucleotide 34 to detach the guanine base from the RNA, forming a covalent enzyme-RNA intermediate. The proton acceptor active site deprotonates the incoming PreQ1, allowing a nucleophilic attack on the C1' of the ribose to form the product. After dissociation, two additional enzymatic reactions on the tRNA convert PreQ1 to queuine (Q), resulting in the hypermodified nucleoside queuosine (7-(((4,5-cis-dihydroxy-2-cyclopenten-1-yl)amino)methyl)-7-deazaguanosine). In Treponema denticola (strain ATCC 35405 / DSM 14222 / CIP 103919 / JCM 8153 / KCTC 15104), this protein is Queuine tRNA-ribosyltransferase.